A 316-amino-acid chain; its full sequence is Putative S-adenosyl-L-methionine-dependent methyltransferase MAB_4606c (316 aa).

S-adenosyl-L-methionine contacts are provided by residues aspartate 137 and 166 to 167 (DL).

It belongs to the UPF0677 family.

Its function is as follows. Exhibits S-adenosyl-L-methionine-dependent methyltransferase activity. The sequence is that of Putative S-adenosyl-L-methionine-dependent methyltransferase MAB_4606c from Mycobacteroides abscessus (strain ATCC 19977 / DSM 44196 / CCUG 20993 / CIP 104536 / JCM 13569 / NCTC 13031 / TMC 1543 / L948) (Mycobacterium abscessus).